Reading from the N-terminus, the 148-residue chain is MKKVLVLHGINLNMFGKRDPAHYGTTTLKEIDARISEWAAELGFEVECFQTNHEGEMASRIHAAHEENVDAVVINAGAWTHYSYGIADALAILKAPIVEVHMSNIHAREEFRHHSVIAGLAKGQICGFGVDSYHLGLIAASNLIKVEN.

Tyr23 serves as the catalytic Proton acceptor. Substrate-binding residues include Asn75, His81, and Asp88. The active-site Proton donor is His101. Residues 102-103 and Arg112 each bind substrate; that span reads MS.

It belongs to the type-II 3-dehydroquinase family. Homododecamer.

The catalysed reaction is 3-dehydroquinate = 3-dehydroshikimate + H2O. Its pathway is metabolic intermediate biosynthesis; chorismate biosynthesis; chorismate from D-erythrose 4-phosphate and phosphoenolpyruvate: step 3/7. Catalyzes a trans-dehydration via an enolate intermediate. This is 3-dehydroquinate dehydratase from Syntrophotalea carbinolica (strain DSM 2380 / NBRC 103641 / GraBd1) (Pelobacter carbinolicus).